Reading from the N-terminus, the 1380-residue chain is Respiration factor 2 (1380 aa).

2 consecutive C2H2-type zinc fingers follow at residues 151 to 173 and 179 to 202; these read FLCPTCTRGFVRQEHLKRHQHSH and YLCIFCGRCFARRDLVLRHQQKLH. The tract at residues 208 to 231 is disordered; sequence TGDPRRMTPAPNSTSSFASKRRHS. Residues S231 and S322 each carry the phosphoserine modification. 4 disordered regions span residues 413–445, 544–584, 624–643, and 652–688; these read NLNLFNNDPSGQQQQQQQQQQNSTSSTIVNSNN, SPKN…NIDP, SRSSIPNKSPPNHSATSLNH, and LNLSLNGSTDLPSTPQNQLKEPSYSDPISHSSHKRRR. The segment covering 424–445 has biased composition (low complexity); it reads QQQQQQQQQQNSTSSTIVNSNN. At S544 the chain carries Phosphoserine. Residues 544 to 569 are compositionally biased toward polar residues; sequence SPKNPPTTVSDSSSTINFNPGTNNLL. Over residues 575–584 the composition is skewed to basic and acidic residues; it reads PNDKDSNIDP. Over residues 624–634 the composition is skewed to low complexity; the sequence is SRSSIPNKSPP. A Phosphoserine modification is found at S632. The segment covering 652 to 681 has biased composition (polar residues); sequence LNLSLNGSTDLPSTPQNQLKEPSYSDPISH.

The protein belongs to the RSF2/TDA9 family.

The protein localises to the nucleus. Transcription factor that regulates expression of both nuclear and mitochondrial genes, and more specifically those required for glycerol-based growth and respiration. The polypeptide is Respiration factor 2 (RSF2) (Saccharomyces cerevisiae (strain ATCC 204508 / S288c) (Baker's yeast)).